Reading from the N-terminus, the 676-residue chain is MKQPLLALQLLKLLLLLLLPLPPLPRALREARCCPEPCNCTPDGALRCPGPGAGLTRLSLAYLPVKVIPSQAFRGLNEVIKIEISQSDSLERIEANAFDNLLNLSEILIQNTKNLIHIEPGAFTNLPRLKYLSICNTGIRKFPDVTKIFSSETNFILEICDNLHITTIPGNAFQGMNNESITLKLYGNGFEEVQSHAFNGTTVISLVLKENVHLERIHNGAFRGATGPSILDISSTKLQALPSHGLESIQTLIATSSYSLKKLPSREKFANLLDATLTYPSHCCAFRNVPTKDYPAIFAESGQSGWDYDYGFHLPKTPRCAPEPDAFNPCEDIMGYDFLRVLIWLINILAIMGNMTVLFVLLTSRYKLTVPRFLMCNLSFADFCMGLYLLLIASVDSQTKGQYYNHAIDWQTGSGCNTAGFFTVFASELSVYTLTVITLERWHTITYAIHLDQKLRLRHAILIMLGGWLFSSLIAMLPLVGVSNYMKVSICFPMDVETTLSQIYILTILILNVVAFIIICACYIKIYFAVRNPELMATNKDTKIAKKMAILIFTDFTCMAPISFFAISAAFKMPLITVTNSKVLLVLFYPINSCANPFLYAIFTKTFRRDFFLLLGKFGCCKHRAELYRRKDFSAYTSNYKNGFTGSSKPSQSTLKLPALHCQGTALLDKTCYKEY.

The first 29 residues, 1 to 29 (MKQPLLALQLLKLLLLLLLPLPPLPRALR), serve as a signal peptide directing secretion. Topologically, residues 30–340 (EARCCPEPCN…EDIMGYDFLR (311 aa)) are extracellular. N103 carries an N-linked (GlcNAc...) asparagine glycan. 5 LRR repeats span residues 126–151 (LPRLKYLSICNTGIRKFPDVTKIFSS), 153–175 (TNFILEICDNLHITTIPGNAFQG), 176–200 (MNNESITLKLYGNGFEEVQSHAFNG), 201–224 (TTVISLVLKENVHLERIHNGAFRG), and 225–248 (ATGPSILDISSTKLQALPSHGLES). 2 N-linked (GlcNAc...) asparagine glycosylation sites follow: N178 and N199. Position 308 is a sulfotyrosine (Y308). Residues 341–362 (VLIWLINILAIMGNMTVLFVLL) traverse the membrane as a helical segment. Over 363–372 (TSRYKLTVPR) the chain is Cytoplasmic. A helical membrane pass occupies residues 373 to 393 (FLMCNLSFADFCMGLYLLLIA). Topologically, residues 394–416 (SVDSQTKGQYYNHAIDWQTGSGC) are extracellular. Residues C416 and C491 are joined by a disulfide bond. Residues 417–439 (NTAGFFTVFASELSVYTLTVITL) traverse the membrane as a helical segment. Residues 440–459 (ERWHTITYAIHLDQKLRLRH) lie on the Cytoplasmic side of the membrane. A helical transmembrane segment spans residues 460–482 (AILIMLGGWLFSSLIAMLPLVGV). The Extracellular segment spans residues 483-502 (SNYMKVSICFPMDVETTLSQ). Residues 503-526 (IYILTILILNVVAFIIICACYIKI) traverse the membrane as a helical segment. Topologically, residues 527-547 (YFAVRNPELMATNKDTKIAKK) are cytoplasmic. A helical membrane pass occupies residues 548-571 (MAILIFTDFTCMAPISFFAISAAF). Residues 572–582 (KMPLITVTNSK) lie on the Extracellular side of the membrane. The helical transmembrane segment at 583 to 604 (VLLVLFYPINSCANPFLYAIFT) threads the bilayer. Over 605–676 (KTFRRDFFLL…LLDKTCYKEY (72 aa)) the chain is Cytoplasmic. S-palmitoyl cysteine attachment occurs at residues C620 and C621.

It belongs to the G-protein coupled receptor 1 family. FSH/LSH/TSH subfamily. Sulfated.

Its subcellular location is the cell membrane. Functionally, receptor for lutropin-choriogonadotropic hormone. The activity of this receptor is mediated by G proteins which activate adenylate cyclase. This chain is Lutropin-choriogonadotropic hormone receptor (LHCGR), found in Callithrix jacchus (White-tufted-ear marmoset).